Here is a 137-residue protein sequence, read N- to C-terminus: Large-conductance mechanosensitive channel (137 aa).

The next 2 membrane-spanning stretches (helical) occupy residues 10–30 (FAMR…AAFG) and 76–96 (GVFL…FMAI).

Belongs to the MscL family. Homopentamer.

It is found in the cell inner membrane. Functionally, channel that opens in response to stretch forces in the membrane lipid bilayer. May participate in the regulation of osmotic pressure changes within the cell. This chain is Large-conductance mechanosensitive channel, found in Erwinia tasmaniensis (strain DSM 17950 / CFBP 7177 / CIP 109463 / NCPPB 4357 / Et1/99).